The sequence spans 163 residues: Nucleotide-binding protein YajQ (163 aa).

The protein belongs to the YajQ family.

Its function is as follows. Nucleotide-binding protein. This is Nucleotide-binding protein YajQ from Salmonella paratyphi A (strain ATCC 9150 / SARB42).